A 265-amino-acid chain; its full sequence is Undecaprenyl-diphosphatase (265 aa).

The next 8 membrane-spanning stretches (helical) occupy residues 19–39 (FLPV…GFTG), 42–62 (ADSF…CLYW), 80–100 (IRGL…GLVA), 108–128 (LFNP…IFLV), 143–163 (MTPG…WPGF), 181–201 (SLAA…ATLY), 220–240 (IGFV…IVLV), and 243–263 (ITLR…FFFW).

Belongs to the UppP family.

It localises to the cell inner membrane. The enzyme catalyses di-trans,octa-cis-undecaprenyl diphosphate + H2O = di-trans,octa-cis-undecaprenyl phosphate + phosphate + H(+). Catalyzes the dephosphorylation of undecaprenyl diphosphate (UPP). Confers resistance to bacitracin. The polypeptide is Undecaprenyl-diphosphatase (Solidesulfovibrio magneticus (strain ATCC 700980 / DSM 13731 / RS-1) (Desulfovibrio magneticus)).